A 641-amino-acid chain; its full sequence is Calpain-6 (641 aa).

The Calpain catalytic domain maps to 26–343; sequence LFCDPTFLPE…FHKLNVCRNV (318 aa). Positions 344–495 are domain III; sequence NNPVFGRKEL…IFSEVPVQLR (152 aa). One can recognise a C2 domain in the interval 498 to 621; it reads TLDMPKMSCW…YLRKKGGPTA (124 aa).

Belongs to the peptidase C2 family. Interacts (via domain III) with microtubules. Interacts (via domain II) with ARHGEF2 (via the N-terminal zinc finger).

It is found in the cytoplasm. The protein resides in the perinuclear region. Its subcellular location is the cytoskeleton. It localises to the spindle. In terms of biological role, microtubule-stabilizing protein that may be involved in the regulation of microtubule dynamics and cytoskeletal organization. May act as a regulator of RAC1 activity through interaction with ARHGEF2 to control lamellipodial formation and cell mobility. Does not seem to have protease activity as it has lost the active site residues. The polypeptide is Calpain-6 (Capn6) (Rattus norvegicus (Rat)).